The primary structure comprises 707 residues: Prolyl endopeptidase-like (707 aa).

Active-site charge relay system residues include Ser-538, Asp-624, and His-670.

The protein belongs to the peptidase S9A family. In terms of assembly, homodimer.

The protein resides in the cytoplasm. Its subcellular location is the cytosol. Its function is as follows. Serine peptidase whose precise substrate specificity remains unclear. Does not cleave peptides after a arginine or lysine residue. Regulates trans-Golgi network morphology and sorting by regulating the membrane binding of the AP-1 complex. May play a role in the regulation of synaptic vesicle exocytosis. In Xenopus laevis (African clawed frog), this protein is Prolyl endopeptidase-like (prepl).